Consider the following 293-residue polypeptide: Ribosomal protein L11 methyltransferase (293 aa).

Positions 145, 166, 188, and 230 each coordinate S-adenosyl-L-methionine.

Belongs to the methyltransferase superfamily. PrmA family.

The protein resides in the cytoplasm. It carries out the reaction L-lysyl-[protein] + 3 S-adenosyl-L-methionine = N(6),N(6),N(6)-trimethyl-L-lysyl-[protein] + 3 S-adenosyl-L-homocysteine + 3 H(+). Functionally, methylates ribosomal protein L11. The protein is Ribosomal protein L11 methyltransferase of Erwinia tasmaniensis (strain DSM 17950 / CFBP 7177 / CIP 109463 / NCPPB 4357 / Et1/99).